The following is a 210-amino-acid chain: MTGLFITLEGPEGAGKSTNREYLAERLRAAGIEVVLTREPGGTPLAERIREVLLAPVDEVMNPDTELLLVFAARAQHLAEVIRPALARGAVVLCDRFTDSTYAYQGGGRGLSLERIAALETFVQGDLRPDLTLIFDLPVEIGLARASARGRLDRFELEGREFFEAVRNAFLKRAEDDPARYVRIDAGQPLVKVQQSLDTLIPNLLELSRG.

ATP is bound at residue 10-17 (GPEGAGKS).

It belongs to the thymidylate kinase family.

The catalysed reaction is dTMP + ATP = dTDP + ADP. Functionally, phosphorylation of dTMP to form dTDP in both de novo and salvage pathways of dTTP synthesis. This Pseudomonas fluorescens (strain Pf0-1) protein is Thymidylate kinase.